Here is a 119-residue protein sequence, read N- to C-terminus: Large ribosomal subunit protein uL14 (119 aa).

It belongs to the universal ribosomal protein uL14 family. As to quaternary structure, part of the 50S ribosomal subunit. Forms a cluster with proteins L3 and L19. In the 70S ribosome, L14 and L19 interact and together make contacts with the 16S rRNA in bridges B5 and B8.

In terms of biological role, binds to 23S rRNA. Forms part of two intersubunit bridges in the 70S ribosome. The sequence is that of Large ribosomal subunit protein uL14 from Neorickettsia sennetsu (strain ATCC VR-367 / Miyayama) (Ehrlichia sennetsu).